Reading from the N-terminus, the 198-residue chain is Dual specificity protein phosphatase 1 (198 aa).

Residues 1–20 form a disordered region; that stretch reads MSSRDRGSPSSSSSSSSLPG. Residues 8–17 show a composition bias toward low complexity; that stretch reads SPSSSSSSSS. Positions 26–47 are caM binding domain 1; that stretch reads EKVKNQIQALVRVIKVARTYRD. A Tyrosine-protein phosphatase domain is found at 50-191; sequence VPSLIEQGLY…LQDLEKSMQV (142 aa). The active-site Phosphocysteine intermediate is Cys135. Residues 151-180 form a caM binding domain 2 region; the sequence is MKKHGMTLAQALQHVKSKRPVASPNAGFIR.

Belongs to the protein-tyrosine phosphatase family. Non-receptor class dual specificity subfamily. Interacts with calmodulin (CaM) in a calcium Ca(2+)-dependent manner. Expressed in roots, stems, leaves and flowers.

The protein resides in the nucleus. The protein localises to the cytoplasm. The catalysed reaction is O-phospho-L-tyrosyl-[protein] + H2O = L-tyrosyl-[protein] + phosphate. The enzyme catalyses O-phospho-L-seryl-[protein] + H2O = L-seryl-[protein] + phosphate. It carries out the reaction O-phospho-L-threonyl-[protein] + H2O = L-threonyl-[protein] + phosphate. Inhibited by sodium vanadate and sodium tungstate. NaF and spermifine repress specifically phosphoserine and phosphothreonine phosphatase activity. Has a dual specificity toward Ser/Thr and Tyr-containing proteins. Dephosphorylates MPK4 in vitro. In Arabidopsis thaliana (Mouse-ear cress), this protein is Dual specificity protein phosphatase 1 (DSPTP1).